A 501-amino-acid chain; its full sequence is Acid-sensing ion channel 1A (501 aa).

The Cytoplasmic portion of the chain corresponds to 1-54 (MKTSVMDLKVEPMDIDFDQPPPLQVFAHTSTLHGISHIFSYEKITAKCCLWVVF). A helical transmembrane segment spans residues 55–71 (FLSSLTFLMYVCIDRIQ). Topologically, residues 72 to 429 (FYLEYPHVTK…ETIEQRKAYE (358 aa)) are extracellular. 7 disulfide bridges follow: C98/C199, C177/C184, C294/C369, C312/C365, C316/C363, C325/C347, and C327/C339. Residue N164 is glycosylated (N-linked (GlcNAc...) asparagine). Residue N370 is glycosylated (N-linked (GlcNAc...) asparagine). A discontinuously helical membrane pass occupies residues 430 to 460 (VAGLLGDIGGQMGLFIGASILTILELFDYLY). Positions 446-448 (GAS) match the GAS motif; ion selectivity filter motif. The Cytoplasmic portion of the chain corresponds to 461–501 (EVMKYRLCRCSNKKHHNNNNNTDHNAVFSLDDVNCHVSKFH).

Belongs to the amiloride-sensitive sodium channel (TC 1.A.6) family. ASIC1 subfamily. In terms of assembly, homotrimer. Heterotrimer; with other ASIC proteins producing channel with different properties. Interacts with asic1c. In terms of tissue distribution, expressed in central nervous system. Faintly expressed in the trunk, presumably in dorsal root ganglia.

Its subcellular location is the cell membrane. It localises to the postsynaptic cell membrane. It is found in the cell projection. The protein resides in the dendrite. It catalyses the reaction Na(+)(in) = Na(+)(out). The enzyme catalyses K(+)(in) = K(+)(out). The catalysed reaction is Li(+)(in) = Li(+)(out). It carries out the reaction Ca(2+)(in) = Ca(2+)(out). Inhibited by the diuretic drug amiloride. Its function is as follows. Forms voltage-independent, pH-gated trimeric sodium channels that act as postsynaptic excitatory receptors in the nervous system, playing a crucial role in regulating synaptic plasticity, learning, and memory. Upon extracellular pH drop this channel elicits transient, fast activating, and completely desensitizing inward currents. Displays high selectivity for sodium ions but can also permit the permeation of other cations. This is Acid-sensing ion channel 1A (asic1a) from Danio rerio (Zebrafish).